Consider the following 357-residue polypeptide: Aurora kinase A- and ninein-interacting protein (357 aa).

Residues Leu-71–Gln-91 show a composition bias toward polar residues. The disordered stretch occupies residues Leu-71–Lys-98. Residues Arg-187 to Phe-357 form an interaction with AURKA region. Ser-267 and Ser-292 each carry phosphoserine. The interval Lys-281–Phe-357 is interaction with RBBP8/CtIP.

Belongs to the AUNIP family. In terms of assembly, interacts (via C-terminus) with AURKA (via C-terminus). Interacts (via N-terminus) with NIN; this interaction blocks NIN phosphorylation by both AURKA and GSK3B. Identified in a complex with NIN and AURKA. Interacts with RBBP8/CtIP. Expressed in heart, skeletal muscles, placenta and testis.

The protein localises to the nucleus. It localises to the chromosome. It is found in the cytoplasm. Its subcellular location is the cytoskeleton. The protein resides in the microtubule organizing center. The protein localises to the centrosome. It localises to the spindle pole. Its function is as follows. DNA-binding protein that accumulates at DNA double-strand breaks (DSBs) following DNA damage and promotes DNA resection and homologous recombination. Serves as a sensor of DNA damage: binds DNA with a strong preference for DNA substrates that mimic structures generated at stalled replication forks, and anchors RBBP8/CtIP to DSB sites to promote DNA end resection and ensuing homologous recombination repair. Inhibits non-homologous end joining (NHEJ). Required for the dynamic movement of AURKA at the centrosomes and spindle apparatus during the cell cycle. The protein is Aurora kinase A- and ninein-interacting protein of Homo sapiens (Human).